A 228-amino-acid chain; its full sequence is Methylthioribulose-1-phosphate dehydratase (228 aa).

Cys-92 is a binding site for substrate. Residues His-110 and His-112 each contribute to the Zn(2+) site. Glu-135 functions as the Proton donor/acceptor in the catalytic mechanism. His-192 serves as a coordination point for Zn(2+).

This sequence belongs to the aldolase class II family. MtnB subfamily. Requires Zn(2+) as cofactor.

The protein localises to the cytoplasm. Its subcellular location is the nucleus. It catalyses the reaction 5-(methylsulfanyl)-D-ribulose 1-phosphate = 5-methylsulfanyl-2,3-dioxopentyl phosphate + H2O. The protein operates within amino-acid biosynthesis; L-methionine biosynthesis via salvage pathway; L-methionine from S-methyl-5-thio-alpha-D-ribose 1-phosphate: step 2/6. Functionally, catalyzes the dehydration of methylthioribulose-1-phosphate (MTRu-1-P) into 2,3-diketo-5-methylthiopentyl-1-phosphate (DK-MTP-1-P). The protein is Methylthioribulose-1-phosphate dehydratase of Schizosaccharomyces pombe (strain 972 / ATCC 24843) (Fission yeast).